The primary structure comprises 388 residues: Succinate--CoA ligase [ADP-forming] subunit beta (388 aa).

The ATP-grasp domain maps to 9–245 (KELLAGYGLP…KSQENERELK (237 aa)). ATP contacts are provided by residues lysine 46, 53 to 55 (GRG), glutamate 100, tyrosine 103, and glutamate 108. Residues asparagine 200 and aspartate 214 each coordinate Mg(2+). Residues asparagine 265 and 322–324 (GIV) contribute to the substrate site.

This sequence belongs to the succinate/malate CoA ligase beta subunit family. As to quaternary structure, heterotetramer of two alpha and two beta subunits. Mg(2+) is required as a cofactor.

The enzyme catalyses succinate + ATP + CoA = succinyl-CoA + ADP + phosphate. It carries out the reaction GTP + succinate + CoA = succinyl-CoA + GDP + phosphate. Its pathway is carbohydrate metabolism; tricarboxylic acid cycle; succinate from succinyl-CoA (ligase route): step 1/1. In terms of biological role, succinyl-CoA synthetase functions in the citric acid cycle (TCA), coupling the hydrolysis of succinyl-CoA to the synthesis of either ATP or GTP and thus represents the only step of substrate-level phosphorylation in the TCA. The beta subunit provides nucleotide specificity of the enzyme and binds the substrate succinate, while the binding sites for coenzyme A and phosphate are found in the alpha subunit. The chain is Succinate--CoA ligase [ADP-forming] subunit beta from Neisseria meningitidis serogroup C / serotype 2a (strain ATCC 700532 / DSM 15464 / FAM18).